The following is a 261-amino-acid chain: Acetylglutamate kinase (261 aa).

Substrate is bound by residues 41–42 (GG), Arg-63, and Asn-157.

The protein belongs to the acetylglutamate kinase family. ArgB subfamily.

It localises to the cytoplasm. It catalyses the reaction N-acetyl-L-glutamate + ATP = N-acetyl-L-glutamyl 5-phosphate + ADP. It participates in amino-acid biosynthesis; L-arginine biosynthesis; N(2)-acetyl-L-ornithine from L-glutamate: step 2/4. Its function is as follows. Catalyzes the ATP-dependent phosphorylation of N-acetyl-L-glutamate. In Koribacter versatilis (strain Ellin345), this protein is Acetylglutamate kinase.